A 184-amino-acid chain; its full sequence is MKPLVIKFAWPLPLLLLLLLPPKLQGNYWDFGEYELNPEVRDFIREYESTGPTKPPTVKRIIEMITIGDQPFNDYDYCNTELRTKQIHYKGRCYPEHYIAGVPYGELVKACDGEEVQCKNGVKSCRRSMNLIEGVRCVLETGQQMTNCTYKTILMIGYPVVSCQWDEETKIFIPDHIYNMSLPK.

The N-terminal stretch at Met1 to Gln25 is a signal peptide. Intrachain disulfides connect Cys93–Cys148, Cys111–Cys163, and Cys118–Cys125. 2 N-linked (GlcNAc...) asparagine glycosylation sites follow: Asn147 and Asn179.

It belongs to the pancreatic ribonuclease family.

Its subcellular location is the secreted. In terms of biological role, does not exhibit any ribonuclease activity. The protein is Inactive ribonuclease-like protein 9 (Rnase9) of Mus musculus (Mouse).